The chain runs to 79 residues: Acyl carrier protein (79 aa).

Positions 6–79 (KEILDGLAEI…VQDVINYIQK (74 aa)) constitute a Carrier domain. S41 is modified (O-(pantetheine 4'-phosphoryl)serine).

Belongs to the acyl carrier protein (ACP) family. 4'-phosphopantetheine is transferred from CoA to a specific serine of apo-ACP by AcpS. This modification is essential for activity because fatty acids are bound in thioester linkage to the sulfhydryl of the prosthetic group.

It is found in the cytoplasm. Its pathway is lipid metabolism; fatty acid biosynthesis. In terms of biological role, carrier of the growing fatty acid chain in fatty acid biosynthesis. The polypeptide is Acyl carrier protein (Thermobifida fusca (strain YX)).